The sequence spans 359 residues: Protein RecA (359 aa).

Residue 69–76 (GPESSGKT) participates in ATP binding. The segment at 337 to 359 (SANSVAKASEEDEEEEVDLEPEE) is disordered. Acidic residues predominate over residues 346–359 (EEDEEEEVDLEPEE).

It belongs to the RecA family.

The protein localises to the cytoplasm. In terms of biological role, can catalyze the hydrolysis of ATP in the presence of single-stranded DNA, the ATP-dependent uptake of single-stranded DNA by duplex DNA, and the ATP-dependent hybridization of homologous single-stranded DNAs. It interacts with LexA causing its activation and leading to its autocatalytic cleavage. The chain is Protein RecA from Nostoc punctiforme (strain ATCC 29133 / PCC 73102).